Reading from the N-terminus, the 369-residue chain is Chorismate synthase (369 aa).

Residues Arg48 and Arg54 each contribute to the NADP(+) site. Residues 125–127 (RSS), 238–239 (NA), Gly278, 293–297 (KPTSS), and Arg319 each bind FMN.

This sequence belongs to the chorismate synthase family. In terms of assembly, homotetramer. The cofactor is FMNH2.

The enzyme catalyses 5-O-(1-carboxyvinyl)-3-phosphoshikimate = chorismate + phosphate. It functions in the pathway metabolic intermediate biosynthesis; chorismate biosynthesis; chorismate from D-erythrose 4-phosphate and phosphoenolpyruvate: step 7/7. Catalyzes the anti-1,4-elimination of the C-3 phosphate and the C-6 proR hydrogen from 5-enolpyruvylshikimate-3-phosphate (EPSP) to yield chorismate, which is the branch point compound that serves as the starting substrate for the three terminal pathways of aromatic amino acid biosynthesis. This reaction introduces a second double bond into the aromatic ring system. The chain is Chorismate synthase from Nitrosococcus oceani (strain ATCC 19707 / BCRC 17464 / JCM 30415 / NCIMB 11848 / C-107).